The chain runs to 842 residues: Glucans biosynthesis glucosyltransferase H (842 aa).

8 helical membrane-spanning segments follow: residues 140–160, 194–214, 513–533, 568–588, 600–620, 622–642, 656–676, and 680–700; these read ILLL…KTIL, ILIL…TALM, VFLT…FLAL, IALF…SIIL, FIRV…LAPV, MLFH…VWNS, FMRH…MAWL, and FLFW…VSAI.

Belongs to the glycosyltransferase 2 family. OpgH subfamily.

Its subcellular location is the cell inner membrane. Its pathway is glycan metabolism; osmoregulated periplasmic glucan (OPG) biosynthesis. Involved in the biosynthesis of osmoregulated periplasmic glucans (OPGs). This chain is Glucans biosynthesis glucosyltransferase H, found in Klebsiella pneumoniae (strain 342).